A 342-amino-acid polypeptide reads, in one-letter code: Dihydroorotase (342 aa).

Residues His-13 and His-15 each contribute to the Zn(2+) site. Substrate-binding positions include 15–17 (HLR) and Asn-41. Positions 97, 134, and 172 each coordinate Zn(2+). The residue at position 97 (Lys-97) is an N6-carboxylysine. His-134 lines the substrate pocket. Substrate is bound at residue Leu-217. Position 245 (Asp-245) interacts with Zn(2+). Residue Asp-245 is part of the active site. His-249 and Ala-261 together coordinate substrate.

The protein belongs to the metallo-dependent hydrolases superfamily. DHOase family. Class II DHOase subfamily. As to quaternary structure, homodimer. The cofactor is Zn(2+).

It catalyses the reaction (S)-dihydroorotate + H2O = N-carbamoyl-L-aspartate + H(+). The protein operates within pyrimidine metabolism; UMP biosynthesis via de novo pathway; (S)-dihydroorotate from bicarbonate: step 3/3. In terms of biological role, catalyzes the reversible cyclization of carbamoyl aspartate to dihydroorotate. This chain is Dihydroorotase, found in Shewanella loihica (strain ATCC BAA-1088 / PV-4).